Reading from the N-terminus, the 387-residue chain is Double C2-like domain-containing protein gamma (387 aa).

2 C2 domains span residues 83 to 209 and 243 to 376; these read ALGT…DICL and ERGR…ELWH. Asp274, Asp280, Asp334, Asp336, and Asp342 together coordinate Ca(2+).

It depends on Ca(2+) as a cofactor.

May be involved in regulation of vesicular trafficking. In vitro, does not bind calcium and phospholipids. The chain is Double C2-like domain-containing protein gamma (Doc2g) from Mus musculus (Mouse).